The chain runs to 575 residues: Bifunctional decalin synthase calF (575 aa).

An N-terminal signal peptide occupies residues 1 to 18 (MSFKPLLLSLSLLSPALG). Asn-46, Asn-103, Asn-127, Asn-175, Asn-268, Asn-308, Asn-359, Asn-425, and Asn-485 each carry an N-linked (GlcNAc...) asparagine glycan. One can recognise an FAD-binding PCMH-type domain in the interval 118 to 297 (LGNYASYSIN…LSMTTKVFQD (180 aa)).

Belongs to the oxygen-dependent FAD-linked oxidoreductase family.

The protein operates within secondary metabolite biosynthesis. Its function is as follows. Bifunctional decaline synthase; part of the gene cluster that mediates the biosynthesis of calbistrin A and related compounds. Calbistrin A is a secondary metabolite with an interesting structure that was recently found to have bioactivity against leukemia cells. It consists of two polyketides linked by an ester bond: a bicyclic decalin containing polyketide and a linear 12 carbon dioic acid structure. The polyketide synthase calA is probably responsible for forming the decalin moiety. Because calA lacks a designated enoylreductase (ER) domain, the required activity is provided by the trans-enoyl reductase calK. Following release from the PKS, calF then probably catalyzes the oxidation and the subsequent Diels Alder cycloisomerization that lead to the formation of the decalin moiety. The decalin polyketide backbone includes two C-methyl groups, at C7 and C11 in backbone, of which the C7 position is probably methylated by the methyltransferase domain of calA. A candidate for adding the methyl group at C11, if not done by CalA, is the cluster methyltransferase calH. Several additional tailoring enzymes within the cluster could be involved in the modification of the decalin polyketide product. Those include the 3 cytochrome P450 monooxygenases CalE, CalG and CalL, of which one might be responsible for the introduction of the extra hydroxyl group attached to the backbone of the decalin moiety, at position C9 in the backbone, that allows for attachment of the linear moiety. One tailoring enzyme activity that is expected to be involved in biosynthesis of calbistrin is an acyltransferase for connecting the two polyketide synthase products, and which could be performed by the cluster acyltransferase calJ. The enzyme responsible for the biosynthesis of the linear moiety, probably a second PKS, has not been identified yet. The chain is Bifunctional decalin synthase calF from Penicillium decumbens.